The sequence spans 247 residues: DNA polymerase sliding clamp 1 (247 aa).

The protein belongs to the PCNA family. As to quaternary structure, heterotrimer. The subunits circularize to form a toroid; DNA passes through its center. Replication factor C (RFC) is required to load the toroid on the DNA.

Functionally, sliding clamp subunit that acts as a moving platform for DNA processing. Responsible for tethering the catalytic subunit of DNA polymerase and other proteins to DNA during high-speed replication. In Aeropyrum pernix (strain ATCC 700893 / DSM 11879 / JCM 9820 / NBRC 100138 / K1), this protein is DNA polymerase sliding clamp 1.